Reading from the N-terminus, the 219-residue chain is Ras-related protein Rab-3D (219 aa).

At A2 the chain carries N-acetylalanine. Residue 29–37 participates in GDP binding; it reads GNSSVGKTS. Positions 31, 32, 33, 34, 35, 36, 37, 49, and 53 each coordinate GTP. T36 contributes to the Mg(2+) binding site. The short motif at 49-58 is the Switch 1 element; sequence PAFVSTVGID. Residues T54 and D77 each coordinate Mg(2+). Residue G80 participates in GTP binding. A Switch 2 motif is present at residues 80-96; that stretch reads GQERYRTITTAYYRGAM. A Phosphothreonine; by LRRK2 modification is found at T86. GTP contacts are provided by N135, K136, D138, A166, and K167. Residues 135–138 and 165–167 contribute to the GDP site; these read NKCD and SAK. Position 190 is a phosphoserine (S190). The segment covering 190–199 has biased composition (low complexity); it reads SLEPSSSSGS. Residues 190–219 are disordered; that stretch reads SLEPSSSSGSNGKGPAVGDAPAPQPSSCSC. 2 S-geranylgeranyl cysteine lipidation sites follow: C217 and C219. C219 is subject to Cysteine methyl ester.

The protein belongs to the small GTPase superfamily. Rab family. As to quaternary structure, interacts with RIMS1, RIMS2, RPH3A, RPH3AL and RAB3IP. The GTP-bound form interacts with REP15. Interacts with CHM and CHML; phosphorylation at Thr-86 disrupts these interactions. Interacts with MADD (via uDENN domain); the GTP-bound form is preferred for interaction. It depends on Mg(2+) as a cofactor. Phosphorylation of Thr-86 in the switch II region by LRRK2 prevents the association of RAB regulatory proteins, including CHM and CHML. In terms of tissue distribution, highly expressed in granulocytes of peripheral blood. Constitutively expressed at low levels in all hematopoietic cell lines investigated.

It is found in the cell membrane. The catalysed reaction is GTP + H2O = GDP + phosphate + H(+). With respect to regulation, regulated by guanine nucleotide exchange factors (GEFs) which promote the exchange of bound GDP for free GTP. Regulated by GTPase activating proteins (GAPs) which increase the GTP hydrolysis activity. Inhibited by GDP dissociation inhibitors (GDIs) which prevent Rab-GDP dissociation. Functionally, the small GTPases Rab are key regulators of intracellular membrane trafficking, from the formation of transport vesicles to their fusion with membranes. Rabs cycle between an inactive GDP-bound form and an active GTP-bound form that is able to recruit to membranes different sets of downstream effectors directly responsible for vesicle formation, movement, tethering and fusion. RAB3D may be involved in the insulin-induced exocytosis of GLUT4-containing vesicles in adipocytes. This Homo sapiens (Human) protein is Ras-related protein Rab-3D.